Reading from the N-terminus, the 187-residue chain is Probable nicotinate-nucleotide adenylyltransferase (187 aa).

Belongs to the NadD family.

The catalysed reaction is nicotinate beta-D-ribonucleotide + ATP + H(+) = deamido-NAD(+) + diphosphate. It functions in the pathway cofactor biosynthesis; NAD(+) biosynthesis; deamido-NAD(+) from nicotinate D-ribonucleotide: step 1/1. Functionally, catalyzes the reversible adenylation of nicotinate mononucleotide (NaMN) to nicotinic acid adenine dinucleotide (NaAD). In Anaeromyxobacter dehalogenans (strain 2CP-C), this protein is Probable nicotinate-nucleotide adenylyltransferase.